The primary structure comprises 256 residues: tRNA-cytidine(32) 2-sulfurtransferase (256 aa).

The short motif at 35–40 is the PP-loop motif element; the sequence is SGGKDS. 3 residues coordinate [4Fe-4S] cluster: Cys-110, Cys-113, and Cys-201.

Belongs to the TtcA family. As to quaternary structure, homodimer. It depends on Mg(2+) as a cofactor. [4Fe-4S] cluster is required as a cofactor.

Its subcellular location is the cytoplasm. The catalysed reaction is cytidine(32) in tRNA + S-sulfanyl-L-cysteinyl-[cysteine desulfurase] + AH2 + ATP = 2-thiocytidine(32) in tRNA + L-cysteinyl-[cysteine desulfurase] + A + AMP + diphosphate + H(+). It functions in the pathway tRNA modification. Functionally, catalyzes the ATP-dependent 2-thiolation of cytidine in position 32 of tRNA, to form 2-thiocytidine (s(2)C32). The sulfur atoms are provided by the cysteine/cysteine desulfurase (IscS) system. This is tRNA-cytidine(32) 2-sulfurtransferase from Coxiella burnetii (strain Dugway 5J108-111).